We begin with the raw amino-acid sequence, 498 residues long: 3-octaprenyl-4-hydroxybenzoate carboxy-lyase (498 aa).

Asn177 is a binding site for Mn(2+). Prenylated FMN-binding positions include Ile180 to Arg182, Arg194 to Leu196, and Arg199 to Gly200. Glu243 lines the Mn(2+) pocket. Asp292 functions as the Proton donor in the catalytic mechanism.

This sequence belongs to the UbiD family. Homohexamer. It depends on prenylated FMN as a cofactor. The cofactor is Mn(2+).

It localises to the cell membrane. The catalysed reaction is a 4-hydroxy-3-(all-trans-polyprenyl)benzoate + H(+) = a 2-(all-trans-polyprenyl)phenol + CO2. It functions in the pathway cofactor biosynthesis; ubiquinone biosynthesis. Functionally, catalyzes the decarboxylation of 3-octaprenyl-4-hydroxy benzoate to 2-octaprenylphenol, an intermediate step in ubiquinone biosynthesis. In Methylococcus capsulatus (strain ATCC 33009 / NCIMB 11132 / Bath), this protein is 3-octaprenyl-4-hydroxybenzoate carboxy-lyase.